The primary structure comprises 148 residues: Calmodulin-related protein 97A (148 aa).

4 EF-hand domains span residues 7-42 (EQIA…LGQN), 43-78 (PTEA…QMRE), 80-115 (DTEE…LGEK), and 116-148 (VTDE…ISQK). Residues Asp-20, Thr-24, Lys-26, Glu-31, Asn-58, Asn-60, Gln-62, Glu-67, Asp-93, Asp-95, Asp-97, Glu-104, Asp-129, Asp-131, Asp-133, Met-135, and Glu-140 each contribute to the Ca(2+) site.

It belongs to the calmodulin family.

Its function is as follows. May be involved in calcium-mediated signal transduction. The polypeptide is Calmodulin-related protein 97A (Acam) (Drosophila melanogaster (Fruit fly)).